The chain runs to 379 residues: MATAGKVIKCKAAVAWEAGKPLSIEEVEVAPPQAMEVRVKILYTSLCHTDVYFWEAKGQTPVFPRIFGHEAGGIIESVGEGVTDVAPGDHVLPVFTGECKECPHCKSAESNMCDLLRINTVRGVMIGDGKSRFSINGKPIYHFVGTSTFSEYTVMHVGCVAKINPEAPLDKVCVLSCGISTGLGASINVAKPPKGSTVAIFGLGAVGLAAAEGARIAGASRIIGVDLNPSRFEEAKKFGCTEFVNPKDHNKPVQEVLADMTNGGVDRSVECTGNINAMIQAFECVHDGWGVAVLVGVPHKDAEFKTHPMNFLNERTLKGTFFGNFKPRTDLPNVVELYMKKELEVEKFITHSVPFSEINKAFDLMAKGEGIRCIIRMEN.

Zn(2+) is bound by residues C47, T49, H69, C99, C102, C105, C113, and C177. Residues T49 and H69 each coordinate an alcohol. T49 contributes to the NAD(+) binding site. NAD(+)-binding positions include 202–207 (GLGAVG), D226, R231, T272, V295, 295–297 (VGV), F322, and R372.

It belongs to the zinc-containing alcohol dehydrogenase family. Homodimer. It depends on Zn(2+) as a cofactor.

Its subcellular location is the cytoplasm. The catalysed reaction is a primary alcohol + NAD(+) = an aldehyde + NADH + H(+). It catalyses the reaction a secondary alcohol + NAD(+) = a ketone + NADH + H(+). The polypeptide is Alcohol dehydrogenase 1 (ADH1) (Cenchrus americanus (Pearl millet)).